We begin with the raw amino-acid sequence, 177 residues long: Small ribosomal subunit protein mS23 (177 aa).

Residue Ala2 is modified to N-acetylalanine. N6-succinyllysine is present on Lys83. Lys102 carries the post-translational modification N6-acetyllysine. Residues 145-177 form a disordered region; that stretch reads LQASSEGHEPQEDDDLAQRGQVKQEPETAPSPP.

Belongs to the mitochondrion-specific ribosomal protein mS23 family. Component of the mitochondrial ribosome small subunit (28S) which comprises a 12S rRNA and about 30 distinct proteins.

It localises to the mitochondrion. The polypeptide is Small ribosomal subunit protein mS23 (Mus musculus (Mouse)).